Consider the following 63-residue polypeptide: Prokaryotic ubiquitin-like protein Pup (63 aa).

A compositionally biased stretch (polar residues) spans 1–11 (MPQKFEQMQSA). The interval 1 to 28 (MPQKFEQMQSAEQKHDEDETIAQAGTQI) is disordered. The segment at 19-57 (ETIAQAGTQIDDTVDALDAVLDDIESVLESNAEEYVGSF) is ARC ATPase binding. An Isoglutamyl lysine isopeptide (Glu-Lys) (interchain with K-? in acceptor proteins) cross-link involves residue Glu-63.

The protein belongs to the prokaryotic ubiquitin-like protein family. Strongly interacts with the proteasome-associated ATPase ARC through a hydrophobic interface; the interacting region of Pup lies in its C-terminal half. There is one Pup binding site per ARC hexamer ring.

Its pathway is protein degradation; proteasomal Pup-dependent pathway. In terms of biological role, protein modifier that is covalently attached to lysine residues of substrate proteins, thereby targeting them for proteasomal degradation. The tagging system is termed pupylation. The chain is Prokaryotic ubiquitin-like protein Pup (pup) from Bifidobacterium adolescentis (strain ATCC 15703 / DSM 20083 / NCTC 11814 / E194a).